We begin with the raw amino-acid sequence, 384 residues long: Galactokinase (384 aa).

Residue Glu-34–Asp-37 coordinates substrate. Ser-123–Ser-129 provides a ligand contact to ATP. Ser-129 and Glu-161 together coordinate Mg(2+). Asp-173 serves as the catalytic Proton acceptor. Residue Tyr-222 coordinates substrate.

The protein belongs to the GHMP kinase family. GalK subfamily.

It localises to the cytoplasm. The enzyme catalyses alpha-D-galactose + ATP = alpha-D-galactose 1-phosphate + ADP + H(+). The protein operates within carbohydrate metabolism; galactose metabolism. In terms of biological role, catalyzes the transfer of the gamma-phosphate of ATP to D-galactose to form alpha-D-galactose-1-phosphate (Gal-1-P). The sequence is that of Galactokinase from Haemophilus influenzae (strain PittGG).